Here is a 279-residue protein sequence, read N- to C-terminus: 3-methyl-2-oxobutanoate hydroxymethyltransferase (279 aa).

Mg(2+) contacts are provided by D43 and D82. Residues 43–44 (DS), D82, and K112 each bind 3-methyl-2-oxobutanoate. E114 is a Mg(2+) binding site. Residue E181 is the Proton acceptor of the active site.

This sequence belongs to the PanB family. Homodecamer; pentamer of dimers. Mg(2+) serves as cofactor.

It localises to the cytoplasm. It catalyses the reaction 3-methyl-2-oxobutanoate + (6R)-5,10-methylene-5,6,7,8-tetrahydrofolate + H2O = 2-dehydropantoate + (6S)-5,6,7,8-tetrahydrofolate. Its pathway is cofactor biosynthesis; (R)-pantothenate biosynthesis; (R)-pantoate from 3-methyl-2-oxobutanoate: step 1/2. Functionally, catalyzes the reversible reaction in which hydroxymethyl group from 5,10-methylenetetrahydrofolate is transferred onto alpha-ketoisovalerate to form ketopantoate. The sequence is that of 3-methyl-2-oxobutanoate hydroxymethyltransferase from Bacillus anthracis (strain A0248).